The sequence spans 189 residues: Ras-like protein 1 (189 aa).

10–17 (GAGGVGKS) is a binding site for GTP. The short motif at 32–40 (YDPTIEDSY) is the Effector region element. Residues 57-61 (DTAGQ) and 116-119 (NKCD) contribute to the GTP site. A Cysteine methyl ester modification is found at Cys186. A lipid anchor (S-geranylgeranyl cysteine) is attached at Cys186. Residues 187–189 (KML) constitute a propeptide, removed in mature form.

The protein belongs to the small GTPase superfamily. Ras family.

The protein resides in the cell membrane. The catalysed reaction is GTP + H2O = GDP + phosphate + H(+). Alternates between an inactive form bound to GDP and an active form bound to GTP. Activated by a guanine nucleotide-exchange factor (GEF) and inactivated by a GTPase-activating protein (GAP). Ras proteins bind GDP/GTP and possess intrinsic GTPase activity. Plays a role in eye development by regulating cell growth, survival of postmitotic ommatidial cells and differentiation of photoreceptor cells. During larval development, mediates Ptth/tor signaling leading to the production of ecdysone, a hormone required for the initiation of metamorphosis. The sequence is that of Ras-like protein 1 from Drosophila willistoni (Fruit fly).